The following is a 149-amino-acid chain: Large ribosomal subunit protein uL15 (149 aa).

Positions 1 to 57 (MRLNDPKPKTGSQHRRRRVGRGIAAGQGASCGFGMRGQKSRSGRPTRPGFEGGQNPL) are disordered. The segment covering 23 to 35 (IAAGQGASCGFGM) has biased composition (gly residues).

It belongs to the universal ribosomal protein uL15 family. In terms of assembly, part of the 50S ribosomal subunit.

Binds to the 23S rRNA. The polypeptide is Large ribosomal subunit protein uL15 (Acaryochloris marina (strain MBIC 11017)).